The primary structure comprises 427 residues: NADH-quinone oxidoreductase subunit 14 (427 aa).

14 helical membrane-spanning segments follow: residues 1–21, 30–50, 57–77, 79–99, 104–124, 137–157, 172–192, 204–224, 230–250, 257–277, 280–300, 322–342, 360–380, and 400–420; these read MTLA…FVLP, LLGL…PFAF, GVSQ…VGLV, SGRF…HLLA, LLLM…LATW, FLLG…FYGA, YALA…LAPF, PTPV…AALL, PEAL…AALA, LLAY…YTGN, ALGF…AVLS, LGLA…LAGF, VLVL…GLGL, and AAVV…GLVL.

Belongs to the complex I subunit 2 family. As to quaternary structure, NDH-1 is composed of 15 different subunits, Nqo1 to Nqo15. The complex has a L-shaped structure, with the hydrophobic arm (subunits Nqo7, Nqo8 and Nqo10 to Nqo14) embedded in the membrane and the hydrophilic peripheral arm (subunits Nqo1 to Nqo6, Nqo9 and Nqo15) protruding into the bacterial cytoplasm. The hydrophilic domain contains all the redox centers.

The protein resides in the cell inner membrane. The catalysed reaction is a quinone + NADH + 5 H(+)(in) = a quinol + NAD(+) + 4 H(+)(out). Its function is as follows. NDH-1 shuttles electrons from NADH, via FMN and iron-sulfur (Fe-S) centers, to quinones in the respiratory chain. The immediate electron acceptor for the enzyme in this species is menaquinone. Couples the redox reaction to proton translocation (for every two electrons transferred, four hydrogen ions are translocated across the cytoplasmic membrane), and thus conserves the redox energy in a proton gradient required for the synthesis of ATP. This Thermus thermophilus (strain ATCC 27634 / DSM 579 / HB8) protein is NADH-quinone oxidoreductase subunit 14 (nqo14).